We begin with the raw amino-acid sequence, 206 residues long: dITP/XTP pyrophosphatase (206 aa).

7 to 12 (SNNAKK) lines the substrate pocket. Catalysis depends on Asp-72, which acts as the Proton acceptor. Asp-72 contributes to the Mg(2+) binding site. Substrate-binding positions include Ser-73, 155–158 (FGYD), Lys-182, and 187–188 (HR).

It belongs to the HAM1 NTPase family. In terms of assembly, homodimer. Requires Mg(2+) as cofactor.

It catalyses the reaction XTP + H2O = XMP + diphosphate + H(+). The catalysed reaction is dITP + H2O = dIMP + diphosphate + H(+). The enzyme catalyses ITP + H2O = IMP + diphosphate + H(+). Functionally, pyrophosphatase that catalyzes the hydrolysis of nucleoside triphosphates to their monophosphate derivatives, with a high preference for the non-canonical purine nucleotides XTP (xanthosine triphosphate), dITP (deoxyinosine triphosphate) and ITP. Seems to function as a house-cleaning enzyme that removes non-canonical purine nucleotides from the nucleotide pool, thus preventing their incorporation into DNA/RNA and avoiding chromosomal lesions. The protein is dITP/XTP pyrophosphatase of Corynebacterium glutamicum (strain R).